The sequence spans 154 residues: Ribosomal RNA large subunit methyltransferase H (154 aa).

S-adenosyl-L-methionine contacts are provided by residues Gly103 and Phe122–Phe127.

Belongs to the RNA methyltransferase RlmH family. Homodimer.

Its subcellular location is the cytoplasm. It catalyses the reaction pseudouridine(1915) in 23S rRNA + S-adenosyl-L-methionine = N(3)-methylpseudouridine(1915) in 23S rRNA + S-adenosyl-L-homocysteine + H(+). Specifically methylates the pseudouridine at position 1915 (m3Psi1915) in 23S rRNA. This chain is Ribosomal RNA large subunit methyltransferase H, found in Caldicellulosiruptor saccharolyticus (strain ATCC 43494 / DSM 8903 / Tp8T 6331).